Reading from the N-terminus, the 171-residue chain is Disulfide bond formation protein B (171 aa).

The Cytoplasmic segment spans residues 1–13 (MSALTRFAQSRLA). Residues 14–30 (WTLLLLTAVGLEACALF) traverse the membrane as a helical segment. Over 31–48 (FQHVMKLDPCVMCIYQRL) the chain is Periplasmic. A disulfide bond links cysteine 40 and cysteine 43. A helical membrane pass occupies residues 49–64 (AVLGVLTAGLIGVVGH). At 65 to 71 (QFRLLRF) the chain is on the cytoplasmic side. Residues 72–89 (LGVLLWGVSAAWGLKLAL) form a helical membrane-spanning segment. Residues 90 to 144 (ELVEMQTNPSPFSTCSFLPEFPEWMPLHEWFPSVFLPTGMCTDIPWEMFGITMSQ) lie on the Periplasmic side of the membrane. The cysteines at positions 104 and 130 are disulfide-linked. Residues 145 to 163 (WMVVAFSTYLIALVVFIVP) form a helical membrane-spanning segment. The Cytoplasmic segment spans residues 164-171 (ALMPTKKA).

This sequence belongs to the DsbB family.

It localises to the cell inner membrane. In terms of biological role, required for disulfide bond formation in some periplasmic proteins. Acts by oxidizing the DsbA protein. The protein is Disulfide bond formation protein B of Shewanella loihica (strain ATCC BAA-1088 / PV-4).